Here is a 320-residue protein sequence, read N- to C-terminus: Ribosomal RNA small subunit methyltransferase H (320 aa).

S-adenosyl-L-methionine is bound by residues 42 to 44 (GGH), aspartate 62, phenylalanine 86, aspartate 108, and glutamine 115.

The protein belongs to the methyltransferase superfamily. RsmH family.

The protein localises to the cytoplasm. The catalysed reaction is cytidine(1402) in 16S rRNA + S-adenosyl-L-methionine = N(4)-methylcytidine(1402) in 16S rRNA + S-adenosyl-L-homocysteine + H(+). In terms of biological role, specifically methylates the N4 position of cytidine in position 1402 (C1402) of 16S rRNA. This is Ribosomal RNA small subunit methyltransferase H from Yersinia pseudotuberculosis serotype O:1b (strain IP 31758).